The sequence spans 194 residues: Imidazoleglycerol-phosphate dehydratase (194 aa).

Belongs to the imidazoleglycerol-phosphate dehydratase family.

Its subcellular location is the cytoplasm. The catalysed reaction is D-erythro-1-(imidazol-4-yl)glycerol 3-phosphate = 3-(imidazol-4-yl)-2-oxopropyl phosphate + H2O. The protein operates within amino-acid biosynthesis; L-histidine biosynthesis; L-histidine from 5-phospho-alpha-D-ribose 1-diphosphate: step 6/9. This chain is Imidazoleglycerol-phosphate dehydratase, found in Streptococcus thermophilus (strain ATCC BAA-491 / LMD-9).